The chain runs to 396 residues: E3 ubiquitin-protein ligase NHLRC1 (396 aa).

The RING-type zinc-finger motif lies at 23–69 (CKVCFERFGHRQQRRPRNLPCGHVVCLACVAALAHPRTLALECPFCR). NHL repeat units follow at residues 110–154 (ALTC…FDSG), 158–201 (AHQF…FDFF), 202–242 (GQIK…LEAD), 245–298 (EGVL…FNSS), 299–347 (MQLI…LGKP), and 348–391 (EEFP…FKVM).

Interacts with AGL. Interacts (via the NHL repeats) with EPM2A/laforin. Forms a complex with EPM2A/laforin and HSP70.

It localises to the endoplasmic reticulum. The protein localises to the nucleus. The enzyme catalyses S-ubiquitinyl-[E2 ubiquitin-conjugating enzyme]-L-cysteine + [acceptor protein]-L-lysine = [E2 ubiquitin-conjugating enzyme]-L-cysteine + N(6)-ubiquitinyl-[acceptor protein]-L-lysine.. It participates in protein modification; protein ubiquitination. Functionally, E3 ubiquitin-protein ligase. Together with the phosphatase EPM2A/laforin, appears to be involved in the clearance of toxic polyglucosan and protein aggregates via multiple pathways. In complex with EPM2A/laforin and HSP70, suppresses the cellular toxicity of misfolded proteins by promoting their degradation through the ubiquitin-proteasome system (UPS). Ubiquitinates the glycogen-targeting protein phosphatase subunits PPP1R3C/PTG and PPP1R3D in a laforin-dependent manner and targets them for proteasome-dependent degradation, thus decreasing glycogen accumulation. Polyubiquitinates EPM2A/laforin and ubiquitinates AGL and targets them for proteasome-dependent degradation. Also promotes proteasome-independent protein degradation through the macroautophagy pathway. The chain is E3 ubiquitin-protein ligase NHLRC1 (Nhlrc1) from Rattus norvegicus (Rat).